We begin with the raw amino-acid sequence, 365 residues long: Histidinol-phosphate aminotransferase (365 aa).

Lys223 carries the post-translational modification N6-(pyridoxal phosphate)lysine.

This sequence belongs to the class-II pyridoxal-phosphate-dependent aminotransferase family. Histidinol-phosphate aminotransferase subfamily. In terms of assembly, homodimer. Pyridoxal 5'-phosphate serves as cofactor.

The enzyme catalyses L-histidinol phosphate + 2-oxoglutarate = 3-(imidazol-4-yl)-2-oxopropyl phosphate + L-glutamate. It participates in amino-acid biosynthesis; L-histidine biosynthesis; L-histidine from 5-phospho-alpha-D-ribose 1-diphosphate: step 7/9. The protein is Histidinol-phosphate aminotransferase of Brucella melitensis biotype 1 (strain ATCC 23456 / CCUG 17765 / NCTC 10094 / 16M).